The sequence spans 648 residues: A-type voltage-gated potassium channel KCND1 (648 aa).

The Cytoplasmic portion of the chain corresponds to 1–183 (MAAGVATWLP…RAFENPHTST (183 aa)). Positions 2–20 (AAGVATWLPFARAAAVGWL) are interaction with KCNIP1, KCNIP2, and other family members. The tract at residues 2-20 (AAGVATWLPFARAAAVGWL) is interaction with KCNIP2. 3 residues coordinate Zn(2+): histidine 104, cysteine 131, and cysteine 132. Residues 144 to 164 (AERLAEDEEAEQAGDGPTLPA) are disordered. A helical transmembrane segment spans residues 184-205 (AALVFYYVTGFFIAVSVIANVV). Over 206–230 (ETIPCRSPTRRPPREQPCGDRFPLA) the chain is Extracellular. Residues 231–252 (FFCMDTACVLIFTGEYLLRLFA) traverse the membrane as a helical segment. Residues 253 to 263 (APSRCRFLRSV) lie on the Cytoplasmic side of the membrane. Residues 264–284 (MSLIDVVAILPYYIGLFMPKN) form a helical membrane-spanning segment. Residues 285–287 (EDV) lie on the Extracellular side of the membrane. A helical; Voltage-sensor transmembrane segment spans residues 288 to 308 (SGAFVTLRVFRVFRIFKFSRH). Residues 309-323 (SQGLRILGYTLKSCA) lie on the Cytoplasmic side of the membrane. The S4-S5 linker stretch occupies residues 310-323 (QGLRILGYTLKSCA). The helical transmembrane segment at 324-345 (SELGFLLFSLTMAIIIFATVMF) threads the bilayer. The Extracellular segment spans residues 346 to 359 (YAEKGTNKTNFTSI). 2 N-linked (GlcNAc...) asparagine glycosylation sites follow: asparagine 352 and asparagine 355. An intramembrane region (helical) is located at residues 360 to 371 (PAAFWYTIVTMT). The short motif at 372 to 377 (TLGYGD) is the Selectivity filter element. An intramembrane segment occupies 372 to 379 (TLGYGDMV). The Extracellular portion of the chain corresponds to 380 to 386 (PSTIAGK). Residues 387–415 (IFGSICSLSGVLVIALPVPVIVSNFSRIY) form a helical membrane-spanning segment. Topologically, residues 416 to 648 (HQNQRADKRR…LPETVKISSL (233 aa)) are cytoplasmic. A Phosphoserine modification is found at serine 458. Residues 474-489 (FEQQHHHLLHCLEKTT) are mediates dendritic targeting. The tract at residues 474 to 489 (FEQQHHHLLHCLEKTT) is required for dendritic targeting. Residue serine 555 is modified to Phosphoserine. The interval 601-636 (IPTPPANTPDESQPSSPGGGGGGASSTLRNSSLGTP) is disordered.

Belongs to the potassium channel family. D (Shal) (TC 1.A.1.2) subfamily. Kv4.1/KCND1 sub-subfamily. As to quaternary structure, component of heteromultimeric potassium channels. Identified in potassium channel complexes containing KCND1, KCND2, KCND3, KCNIP1, KCNIP2, KCNIP3, KCNIP4, DPP6 and DPP10.

It localises to the cell membrane. The enzyme catalyses K(+)(in) = K(+)(out). In terms of biological role, A-type voltage-gated potassium channel that mediates transmembrane potassium transport in excitable membranes in the brain. Mediates A-type current I(SA) in suprachiasmatic nucleus (SCN) neurons. Exhibits a low-threshold A-type current with a hyperpolarized steady-state inactivation midpoint and the recovery process was steeply voltage-dependent, with recovery being markedly faster at more negative potentials. May regulates repetitive firing rates in the suprachiasmatic nucleus (SCN) neurons and circadian rhythms in neuronal excitability and behavior. Contributes to the regulation of the circadian rhythm of action potential firing in suprachiasmatic nucleus neurons, which regulates the circadian rhythm of locomotor activity. The regulatory subunit KCNIP1 modulates the kinetics of channel inactivation, increases the current amplitudes and accelerates recovery from inactivation, shifts activation in a depolarizing direction. The regulatory subunit DPP10 decreases the voltage sensitivity of the inactivation channel gating. In Bos taurus (Bovine), this protein is A-type voltage-gated potassium channel KCND1.